Reading from the N-terminus, the 322-residue chain is CMP-sialic acid transporter 1 (322 aa).

The Cytoplasmic segment spans residues 1 to 2; sequence MQ. The helical transmembrane segment at 3 to 23 threads the bilayer; that stretch reads WYLVAALLTVLTSSQGILTTL. At 24-33 the chain is on the lumenal side; it reads SQSNGKYKYD. Residues 34-54 traverse the membrane as a helical segment; the sequence is YATIPFLAELFKLSFSSFFLW. Over 55 to 75 the chain is Cytoplasmic; that stretch reads KECQSSSPPRMTKEWRSIRLY. The helical transmembrane segment at 76-96 threads the bilayer; it reads LVPSVIYLIHNNVQFATLTYV. At 97-100 the chain is on the lumenal side; that stretch reads DPST. The helical transmembrane segment at 101 to 120 threads the bilayer; that stretch reads YQIMGNLKIVTTGILFRLVL. At 121–126 the chain is on the cytoplasmic side; it reads KRKLSN. Residues 127-144 traverse the membrane as a helical segment; sequence LQWMAVVLLAVGTTTSQV. Residues 145 to 157 are Lumenal-facing; sequence KGCGDAPCDSLFS. A helical membrane pass occupies residues 158-178; the sequence is APFQGYMLGILSACLSALAGV. Residues 179–198 are Cytoplasmic-facing; the sequence is YTEYLMKKNNDSLYWQNVQL. The chain crosses the membrane as a helical span at residues 199–219; it reads YTFGVIFNMGWLIYGDFKAGF. At 220 to 233 the chain is on the lumenal side; the sequence is ERGPWWQRLFNGYS. The helical transmembrane segment at 234–254 threads the bilayer; it reads ITTWMVVFNLGSTGLLVSWLM. Over 255–262 the chain is Cytoplasmic; sequence KYSDNIVK. A helical transmembrane segment spans residues 263–283; that stretch reads VYSTSMAMLLTMVLSVYLFNV. The Lumenal segment spans residues 284–286; sequence RAT.

The protein belongs to the nucleotide-sugar transporter family. CMP-Sialate:CMP antiporter (TC 2.A.7.12) subfamily. As to expression, expressed in roots, leaves and stalks.

It localises to the golgi apparatus membrane. Its function is as follows. Sugar transporter involved in the transport of CMP-sialic acid from the cytoplasm into the Golgi. May transport important nucleotide sugars such as CMP-Kdo (2-keto-3-deoxy-D-manno-octulosonic acid) in physiological conditions. This Oryza sativa subsp. japonica (Rice) protein is CMP-sialic acid transporter 1.